Reading from the N-terminus, the 330-residue chain is Pre-mRNA-splicing factor 38 (330 aa).

Residues 182–330 form a disordered region; that stretch reads SVLDEDLDDE…SRGERDRRRY (149 aa). Residues 184–199 are compositionally biased toward acidic residues; it reads LDEDLDDELPSDEEKA. Residues 213 to 224 are compositionally biased toward basic residues; the sequence is RRPRRVRSKSRS. A compositionally biased stretch (basic and acidic residues) spans 240–330; the sequence is RSRDYYDELE…SRGERDRRRY (91 aa).

Belongs to the PRP38 family. Component of the spliceosome C complex. Interacts with Mfap1 (via C-terminus). As to expression, detected in all germal and follicle cells.

The protein localises to the nucleus. In terms of biological role, required for pre-mRNA splicing. The polypeptide is Pre-mRNA-splicing factor 38 (Drosophila melanogaster (Fruit fly)).